The chain runs to 441 residues: UDP-N-acetylglucosamine--N-acetylmuramyl-(pentapeptide) pyrophosphoryl-undecaprenol N-acetylglucosamine transferase (441 aa).

Residues 28 to 30 (TGG), Asn-140, Arg-176, Ser-204, Ile-257, and Gln-302 each bind UDP-N-acetyl-alpha-D-glucosamine.

Belongs to the glycosyltransferase 28 family. MurG subfamily.

The protein localises to the cell inner membrane. The enzyme catalyses di-trans,octa-cis-undecaprenyl diphospho-N-acetyl-alpha-D-muramoyl-L-alanyl-D-glutamyl-meso-2,6-diaminopimeloyl-D-alanyl-D-alanine + UDP-N-acetyl-alpha-D-glucosamine = di-trans,octa-cis-undecaprenyl diphospho-[N-acetyl-alpha-D-glucosaminyl-(1-&gt;4)]-N-acetyl-alpha-D-muramoyl-L-alanyl-D-glutamyl-meso-2,6-diaminopimeloyl-D-alanyl-D-alanine + UDP + H(+). It participates in cell wall biogenesis; peptidoglycan biosynthesis. Its function is as follows. Cell wall formation. Catalyzes the transfer of a GlcNAc subunit on undecaprenyl-pyrophosphoryl-MurNAc-pentapeptide (lipid intermediate I) to form undecaprenyl-pyrophosphoryl-MurNAc-(pentapeptide)GlcNAc (lipid intermediate II). In Xanthomonas oryzae pv. oryzae (strain KACC10331 / KXO85), this protein is UDP-N-acetylglucosamine--N-acetylmuramyl-(pentapeptide) pyrophosphoryl-undecaprenol N-acetylglucosamine transferase.